Consider the following 90-residue polypeptide: RNA-binding protein Hfq (90 aa).

In terms of domain architecture, Sm spans 9-68 (DPFLNALRRERVPVSIYLVNGIKLQGQVESFDQFVILLKNTVSQMVYKHAISTVVPARPF).

The protein belongs to the Hfq family. As to quaternary structure, homohexamer.

Its function is as follows. RNA chaperone that binds small regulatory RNA (sRNAs) and mRNAs to facilitate mRNA translational regulation in response to envelope stress, environmental stress and changes in metabolite concentrations. Also binds with high specificity to tRNAs. The sequence is that of RNA-binding protein Hfq from Shewanella oneidensis (strain ATCC 700550 / JCM 31522 / CIP 106686 / LMG 19005 / NCIMB 14063 / MR-1).